An 81-amino-acid polypeptide reads, in one-letter code: uncharacterized protein (81 aa).

Helical transmembrane passes span A27–T47 and I54–M74.

The protein resides in the cell membrane. This is an uncharacterized protein from Bacillus subtilis (strain 168).